A 134-amino-acid chain; its full sequence is Pro-opiomelanocortin (134 aa).

The residue at position 1 (Ser1) is an N-acetylserine. Residue Val13 is modified to Valine amide. A Phosphoserine modification is found at Ser31. 2 stretches are compositionally biased toward basic and acidic residues: residues 43–52 (LARERPEPAR) and 79–104 (SAEKKDEGPYKMEHFRWGSPAKDKRY). Residues 43 to 107 (LARERPEPAR…PAKDKRYGGF (65 aa)) are disordered.

The protein belongs to the POMC family. In terms of processing, specific enzymatic cleavages at paired basic residues yield the different active peptides. ACTH and MSH are produced by the pituitary gland.

It is found in the secreted. In terms of biological role, stimulates the adrenal glands to release cortisol. Anorexigenic peptide. Increases the pigmentation of skin by increasing melanin production in melanocytes. Its function is as follows. Increases the pigmentation of skin by increasing melanin production in melanocytes. Functionally, endogenous orexigenic opiate. In terms of biological role, endogenous opiate. The sequence is that of Pro-opiomelanocortin (POMC) from Loxodonta africana (African elephant).